We begin with the raw amino-acid sequence, 100 residues long: NADH-quinone oxidoreductase subunit K (100 aa).

3 helical membrane passes run methionine 1 to glycine 21, isoleucine 28 to alanine 48, and phenylalanine 64 to phenylalanine 84.

It belongs to the complex I subunit 4L family. As to quaternary structure, NDH-1 is composed of 14 different subunits. Subunits NuoA, H, J, K, L, M, N constitute the membrane sector of the complex.

Its subcellular location is the cell inner membrane. It carries out the reaction a quinone + NADH + 5 H(+)(in) = a quinol + NAD(+) + 4 H(+)(out). Its function is as follows. NDH-1 shuttles electrons from NADH, via FMN and iron-sulfur (Fe-S) centers, to quinones in the respiratory chain. The immediate electron acceptor for the enzyme in this species is believed to be ubiquinone. Couples the redox reaction to proton translocation (for every two electrons transferred, four hydrogen ions are translocated across the cytoplasmic membrane), and thus conserves the redox energy in a proton gradient. The polypeptide is NADH-quinone oxidoreductase subunit K (Helicobacter pylori (strain B38)).